A 129-amino-acid chain; its full sequence is Small ribosomal subunit protein uS8 (129 aa).

The protein belongs to the universal ribosomal protein uS8 family. As to quaternary structure, part of the 30S ribosomal subunit. Contacts proteins S5 and S12.

One of the primary rRNA binding proteins, it binds directly to 16S rRNA central domain where it helps coordinate assembly of the platform of the 30S subunit. This chain is Small ribosomal subunit protein uS8, found in Colwellia psychrerythraea (strain 34H / ATCC BAA-681) (Vibrio psychroerythus).